The following is a 478-amino-acid chain: Cytochrome c-552 (478 aa).

The signal sequence occupies residues 1–26 (MARKTLRARRFFSLIFPFFFITSVYA). Position 94 (His94) interacts with heme c. The heme site is built by Cys122, Cys125, and Lys126. Residues Cys160, Cys163, His164, Cys209, Cys212, and His213 each coordinate heme c. Ca(2+) is bound by residues Glu215, Tyr216, Lys261, and Gln263. Tyr216 is a substrate binding site. Residue His264 coordinates substrate. Residues His275, Cys282, Cys285, His286, His301, Cys314, Cys317, His318, and His393 each coordinate heme c.

It belongs to the cytochrome c-552 family. Ca(2+) is required as a cofactor. It depends on heme c as a cofactor.

The protein localises to the periplasm. The enzyme catalyses 6 Fe(III)-[cytochrome c] + NH4(+) + 2 H2O = 6 Fe(II)-[cytochrome c] + nitrite + 8 H(+). It participates in nitrogen metabolism; nitrate reduction (assimilation). Catalyzes the reduction of nitrite to ammonia, consuming six electrons in the process. The protein is Cytochrome c-552 of Salmonella agona (strain SL483).